The primary structure comprises 669 residues: Elongation factor G 2 (669 aa).

A tr-type G domain is found at 1–276; the sequence is MSIRNIGIMA…SIVDYLPSPF (276 aa). Residues 10-17, 74-78, and 128-131 each bind GTP; these read AHIDAGKT, DTPGH, and NKMD.

Belongs to the TRAFAC class translation factor GTPase superfamily. Classic translation factor GTPase family. EF-G/EF-2 subfamily.

Its subcellular location is the cytoplasm. Its function is as follows. Catalyzes the GTP-dependent ribosomal translocation step during translation elongation. During this step, the ribosome changes from the pre-translocational (PRE) to the post-translocational (POST) state as the newly formed A-site-bound peptidyl-tRNA and P-site-bound deacylated tRNA move to the P and E sites, respectively. Catalyzes the coordinated movement of the two tRNA molecules, the mRNA and conformational changes in the ribosome. The sequence is that of Elongation factor G 2 (fusB) from Borreliella burgdorferi (strain ATCC 35210 / DSM 4680 / CIP 102532 / B31) (Borrelia burgdorferi).